Reading from the N-terminus, the 553-residue chain is Putative transport protein CKO_00031 (553 aa).

Transmembrane regions (helical) follow at residues isoleucine 4–isoleucine 24, glycine 28–aspartate 48, phenylalanine 65–serine 85, leucine 95–phenylalanine 115, and methionine 158–methionine 178. RCK C-terminal domains are found at residues glutamine 192–glutamine 276 and aspartate 279–asparagine 361. 6 consecutive transmembrane segments (helical) span residues methionine 371–valine 391, glycine 393–leucine 413, leucine 437–threonine 457, leucine 464–leucine 484, tyrosine 493–alanine 513, and leucine 533–glycine 553.

The protein belongs to the AAE transporter (TC 2.A.81) family. YidE subfamily.

It localises to the cell membrane. The chain is Putative transport protein CKO_00031 from Citrobacter koseri (strain ATCC BAA-895 / CDC 4225-83 / SGSC4696).